We begin with the raw amino-acid sequence, 86 residues long: Cell division topological specificity factor (86 aa).

It belongs to the MinE family.

Prevents the cell division inhibition by proteins MinC and MinD at internal division sites while permitting inhibition at polar sites. This ensures cell division at the proper site by restricting the formation of a division septum at the midpoint of the long axis of the cell. This chain is Cell division topological specificity factor, found in Bordetella petrii (strain ATCC BAA-461 / DSM 12804 / CCUG 43448).